The chain runs to 234 residues: Triosephosphate isomerase (234 aa).

Asn8–Lys10 contacts substrate. His90 serves as the catalytic Electrophile. Catalysis depends on Glu159, which acts as the Proton acceptor. Substrate contacts are provided by Gly165 and Ser197.

The protein belongs to the triosephosphate isomerase family. As to quaternary structure, homodimer.

It is found in the cytoplasm. The enzyme catalyses D-glyceraldehyde 3-phosphate = dihydroxyacetone phosphate. Its pathway is carbohydrate biosynthesis; gluconeogenesis. The protein operates within carbohydrate degradation; glycolysis; D-glyceraldehyde 3-phosphate from glycerone phosphate: step 1/1. Functionally, involved in the gluconeogenesis. Catalyzes stereospecifically the conversion of dihydroxyacetone phosphate (DHAP) to D-glyceraldehyde-3-phosphate (G3P). This is Triosephosphate isomerase from Helicobacter pylori (strain P12).